A 1449-amino-acid polypeptide reads, in one-letter code: DNA polymerase III PolC-type (1449 aa).

Residues 194–231 are disordered; sequence AQEKPVKKESSDNKHKSNGGNKGGYEKKSYKDEPKNEN. 2 stretches are compositionally biased toward basic and acidic residues: residues 197–208 and 217–229; these read KPVKKESSDNKH and GYEKKSYKDEPKN. The region spanning 435–590 is the Exonuclease domain; the sequence is YVVFDIETTG…DDAKATAEIL (156 aa).

The protein belongs to the DNA polymerase type-C family. PolC subfamily.

It localises to the cytoplasm. The catalysed reaction is DNA(n) + a 2'-deoxyribonucleoside 5'-triphosphate = DNA(n+1) + diphosphate. Functionally, required for replicative DNA synthesis. This DNA polymerase also exhibits 3' to 5' exonuclease activity. This chain is DNA polymerase III PolC-type, found in Clostridium perfringens (strain 13 / Type A).